A 504-amino-acid polypeptide reads, in one-letter code: MRELIKEAVNSLDSALELRKLIIKKLNEKKLKESDIIEIVDAVDDLSLEEIQKLGSNLRTFPMGCDLVEIAVGPCSSSLTLIQFIENCILTDYMGFPIHICSYAVADIAEKEGLKPIEVLKMVLENVDVPIDIDHFGMYGPMRFPKEITHCYGDCYFKGPPFKGCPRNRIHKRLIEKEKEHADEFEDWIKLASTLCINVVEEQGGEEHAAPLEEMKIVAETAKKYGKGLEGIFHIGDGYDDLITGIKACIDLDVDVFVVEGAPFNRAKNRLKAFAKAIAVSRILVKGGVVATNGAYEDECRVGLRSGLNTILTGFPLNHHGYMCGYSPKTAKRGNFGLRRVMRIIKEEIRAGNVNATFIDKDMVKAIALGNRFLKGNIYPYSIGGFYLGDAHWAAIKESNLCKKLKINKTIDDISAEKVGLIGGRYISWAIAEKAEEVYISDTDSWVEKATIKILNEAGINAYPCNGDDKKVLEADKAYITTFIPNIALKILNKLRDSKVELLI.

To M.thermoautotrophicum MTH1137.

This is an uncharacterized protein from Methanocaldococcus jannaschii (strain ATCC 43067 / DSM 2661 / JAL-1 / JCM 10045 / NBRC 100440) (Methanococcus jannaschii).